A 646-amino-acid chain; its full sequence is Lamin-1 (646 aa).

The segment at 1–85 (MAEKAGEAGV…GSRATSPTSF (85 aa)) is head. The segment at 1–94 (MAEKAGEAGV…FSRAQEKEEL (94 aa)) is disordered. Polar residues-rich tracts occupy residues 48–67 (ATPSSQQSQKSVRTESSMSL) and 75–87 (QGSRATSPTSFSR). The coil 1A stretch occupies residues 86 to 126 (SRAQEKEELQNLNDRLAKILNKLNDSEEENRTLKIRLTTVQ). Residues 90-446 (EKEELQNLND…KLLSDEEIRL (357 aa)) form the IF rod domain. Positions 127–137 (QETSADLNDQI) are linker 1. The tract at residues 138-281 (GKYRDELERA…SKLQRQSLSV (144 aa)) is coil 1B. Positions 281–301 (VTTVDHHSAQSTSRRSGSDFS) are enriched in polar residues. The disordered stretch occupies residues 281–304 (VTTVDHHSAQSTSRRSGSDFSASV). Positions 282–299 (TTVDHHSAQSTSRRSGSD) are linker 2. The tract at residues 300-439 (FSASVEDMRS…TELEMYNKLL (140 aa)) is coil 2. The tail stretch occupies residues 440–646 (SDEEIRLGIT…GKGILGFFGL (207 aa)). Positions 457–471 (VRHGAKKRKLTETFY) match the Nuclear localization signal motif. Residues 476–487 (GSRSSAGSRSAG) are compositionally biased toward low complexity. The tract at residues 476-513 (GSRSSAGSRSAGHNSTPVTKSQVTRTTVKTSENKSKAS) is disordered. Polar residues predominate over residues 488 to 505 (HNSTPVTKSQVTRTTVKT). In terms of domain architecture, LTD spans 504–618 (KTSENKSKAS…NQMATYEVSA (115 aa)).

The protein belongs to the intermediate filament family.

It localises to the nucleus. Functionally, intermediate filament (IF) protein, component of the nuclear lamina, a fibrous layer on the nucleoplasmic side of the inner nuclear membrane, which is thought to provide a framework for the nuclear envelope. In Hypsibius exemplaris (Freshwater tardigrade), this protein is Lamin-1.